A 33-amino-acid chain; its full sequence is Brevinin-2Rk (33 aa).

Residues cysteine 27 and cysteine 33 are joined by a disulfide bond.

As to expression, expressed by the skin glands.

It is found in the secreted. Its function is as follows. Antimicrobial peptide. This Pelophylax ridibundus (Marsh frog) protein is Brevinin-2Rk.